Consider the following 630-residue polypeptide: Zinc finger protein 37 homolog (630 aa).

Disordered stretches follow at residues 1 to 45 (MSVS…SAAE), 77 to 172 (KPDM…PSKK), and 193 to 285 (HSRN…KHEK). Over residues 14–30 (ETVDRRRSAETTKEAGR) the composition is skewed to basic and acidic residues. In terms of domain architecture, KRAB spans 32 to 103 (LEMAVSEPEA…KGKRPSQGCP (72 aa)). Serine 42 carries the phosphoserine modification. Residues 110–122 (KQKETDGKVQKDD) show a composition bias toward basic and acidic residues. The segment covering 161 to 172 (NNLHKKHVPSKK) has biased composition (basic residues). Positions 193-206 (HSRNCVKRKSDAAK) are enriched in basic and acidic residues. Positions 221–231 (KGKKQTGKKHE) are enriched in basic residues. 2 stretches are compositionally biased toward basic and acidic residues: residues 232–243 (KLSSHSSSDKCN) and 260–274 (IKQDKIQTGEKHEKS). 2 consecutive C2H2-type zinc fingers follow at residues 293-315 (YECNQCGKVLSHKQGLIDHQRVH) and 321-343 (YECNECGIAFSQKSHLVVHQRTH). The segment at 349–367 (YECIQCGKAHGHKHALTDH) adopts a C2H2-type 3; atypical zinc-finger fold. 9 C2H2-type zinc fingers span residues 377-399 (YECAECGKTFRHSSNLIQHVRSH), 405-427 (YECKECGKSFRYNSSLTEHVRTH), 433-455 (YECNECGKAFKYSSSLTKHMRIH), 461-483 (FECNECGKAFSKKSHLIIHQRTH), 489-511 (YKCNECGKAFGHSSSLTYHMRTH), 517-539 (FECNQCGKGFKQIEGLTQHQRVH), 545-567 (YECNECGKAFSQKSHLIVHQRTH), 573-595 (YECNECEKAFNAKSQLVIHQRSH), and 601-623 (YECNECGKTFKQNASLTKHVKTH).

The protein belongs to the krueppel C2H2-type zinc-finger protein family. In terms of tissue distribution, expressed at low level in several tissues including fetal cartilage.

The protein resides in the nucleus. Functionally, may be involved in transcriptional regulation. In Homo sapiens (Human), this protein is Zinc finger protein 37 homolog (ZFP37).